Consider the following 282-residue polypeptide: Undecaprenyl-diphosphatase (282 aa).

A run of 6 helical transmembrane segments spans residues 51–71, 87–107, 115–135, 191–211, 229–249, and 259–279; these read TLVA…AAVI, MGWM…LFET, SLYW…LAEG, ATAA…AGLY, NILV…AFLL, and IFIA…ATGV.

This sequence belongs to the UppP family.

The protein localises to the cell inner membrane. The enzyme catalyses di-trans,octa-cis-undecaprenyl diphosphate + H2O = di-trans,octa-cis-undecaprenyl phosphate + phosphate + H(+). In terms of biological role, catalyzes the dephosphorylation of undecaprenyl diphosphate (UPP). Confers resistance to bacitracin. This Pelodictyon phaeoclathratiforme (strain DSM 5477 / BU-1) protein is Undecaprenyl-diphosphatase.